The following is a 311-amino-acid chain: Progestin and adipoQ receptor family member 3 (311 aa).

The required for interaction with SREBF2 stretch occupies residues 1–20 (MHQKLLKSAHYIELGSYQYW). Residues 1-73 (MHQKLLKSAH…FILSNETVNI (73 aa)) lie on the Cytoplasmic side of the membrane. The interval 41–60 (KDNPYITDGYRAYLPSRLCI) is required for interaction with SCAP. The interval 61–71 (KSLFILSNETV) is golgi targeting. A helical transmembrane segment spans residues 74 to 96 (WSHLLGFFLFFTLGIYDMTSVLP). The Lumenal portion of the chain corresponds to 97–105 (SASASREDF). The chain crosses the membrane as a helical span at residues 106–128 (VICSICLFCFQVCMLCSVGYHLF). The Cytoplasmic portion of the chain corresponds to 129-140 (SCHRSEKTCRRW). The helical transmembrane segment at 141 to 163 (MALDYAGISIGILGCYVSGVFYA) threads the bilayer. Residues 164-172 (FYCNNYWRQ) are Lumenal-facing. Residues 173–195 (VYLITVLAMILAVFFAQIHPNYL) traverse the membrane as a helical segment. The Cytoplasmic portion of the chain corresponds to 196 to 201 (TQQWQR). A helical transmembrane segment spans residues 202–224 (LRSIIFCSVSGYGVIPTLHWVWL). Residues 225 to 238 (NGGIGAPIVQDFAP) are Lumenal-facing. A helical transmembrane segment spans residues 239 to 256 (RVIVMYMIALLAFLFYIS). The Cytoplasmic segment spans residues 257–275 (KVPERYFPGQLNYLGSSHQ). A helical transmembrane segment spans residues 276–298 (IWHILAVVMLYWWHQSTVYVMQY). The tract at residues 299–303 (RHSKP) is golgi targeting. Residues 299–311 (RHSKPCPDYVSHL) lie on the Lumenal side of the membrane.

The protein belongs to the ADIPOR family. Interacts with SCAP and SREBF2; the interactions are direct, increase in low cholesterol conditions and tether SCAP:SREBP complex to the Golgi apparatus. Interaction with SCAP is mutually exclusive with INSIG1. In hepatocytes, interacts with PPARA and HUWE1; the interactions promote PPARA poylubiquitination and HUWE1-mediated degradation. In macrophages, interacts with PPARG and STUB1; the interactions promote PPARG poylubiquitination and STUB1-mediated degradation. In terms of tissue distribution, widely expressed in a range of tissues.

Its subcellular location is the golgi apparatus membrane. Golgi-scaffold protein which modulates its interactors acitivies by anchoring them to the Golgi apparatus. Functions as a spatial regulator of RAF1 kinase by sequestrating it to the Golgi apparatus. Acts as a positive regulator of cholesterol biosynthesis by mediating the anchoring of the SCAP:SREBP complex in the Golgi apparatus, thereby promoting SCAP:SREBF2 complex formation, potentiating SREBF2 and SREBF1 processing and enhancing lipid synthesis. Also regulates PPARA and PPARG functions by mediating their interaction with E3 ubiquitin ligases, such as STUB1 or HUWE1, leading to their polyubiquitination and proteasome-mediated degradation. This Homo sapiens (Human) protein is Progestin and adipoQ receptor family member 3.